We begin with the raw amino-acid sequence, 1475 residues long: Alpha-glucan water dikinase, chloroplastic (1475 aa).

A chloroplast-targeting transit peptide spans 1-85 (MSNSIGRNVL…HRPVLITPRA (85 aa)). Histidine 1077 (tele-phosphohistidine intermediate) is an active-site residue.

It belongs to the PEP-utilizing enzyme family. Homodimer. Mg(2+) serves as cofactor.

Its subcellular location is the plastid. It localises to the chloroplast. It catalyses the reaction [(1-&gt;4)-alpha-D-glucosyl](n) + n ATP + n H2O = [(1-&gt;4)-6-phospho-alpha-D-glucosyl](n) + n AMP + n phosphate + 2n H(+). Mediates the incorporation of phosphate into starch-like alpha-glucan, mostly at the C-6 position of glucose units. Acts as an overall regulator of starch mobilization. Required for starch degradation, suggesting that the phosphate content of starch regulates its degradability. This is Alpha-glucan water dikinase, chloroplastic (R1) from Citrus reticulata (Tangerine).